Here is a 477-residue protein sequence, read N- to C-terminus: MAHLLSASCPSVISLSSSSSKNSVKPFVSGQTFFNAQLLSRSSLKGLLFQEKKPRKSCVFRATAVPITQQAPPETSTNNSSSKPKRVMVIGGDGYCGWATALHLSKKNYEVCIVDNLVRRLFDHQLGLESLTPIASIHDRISRWKALTGKSIELYVGDICDFEFLAESFKSFEPDSVVHFGEQRSAPYSMIDRSRAVYTQHNNVIGTLNVLFAIKEFGEECHLVKLGTMGEYGTPNIDIEEGYITITHNGRTDTLPYPKQASSFYHLSKVHDSHNIAFTCKAWGIRATDLNQGVVYGVKTDETEMHEELRNRLDYDAVFGTALNRFCVQAAVGHPLTVYGKGGQTRGYLDIRDTVQCVEIAIANPAKAGEFRVFNQFTEQFSVNELASLVTKAGSKLGLDVKKMTVPNPRVEAEEHYYNAKHTKLMELGLEPHYLSDSLLDSLLNFAVQFKDRVDTKQIMPSVSWKKIGVKTKSMTT.

Residues 1–21 are disordered; the sequence is MAHLLSASCPSVISLSSSSSK. The N-terminal 86 residues, 1–86, are a transit peptide targeting the chloroplast; sequence MAHLLSASCP…TNNSSSKPKR (86 aa). NAD(+)-binding positions include 95–96, 115–119, 158–159, arginine 184, and asparagine 202; these read YC, DNLVR, and DI. Arginine 184 contacts substrate. Threonine 228 and tyrosine 265 together coordinate substrate. Threonine 228 is an active-site residue. 2 residues coordinate NAD(+): tyrosine 265 and lysine 269. Residue tyrosine 265 is the Proton acceptor of the active site. The active site involves lysine 269. Residue glutamine 292 coordinates substrate. Valine 295 contacts NAD(+). Substrate contacts are provided by residues 322-325, 337-339, and 410-412; these read ALNR, TVY, and RVE.

The protein belongs to the NAD(P)-dependent epimerase/dehydratase family. In terms of assembly, homodimer. NAD(+) is required as a cofactor.

It localises to the plastid. The protein resides in the chloroplast. It carries out the reaction sulfite + UDP-alpha-D-glucose + H(+) = UDP-alpha-D-6-sulfoquinovose + H2O. Its activity is regulated as follows. Concentrations above 100 uM sulfite inhibit the reaction. Functionally, involved in the biosynthesis of sulfolipids found in thylakoid membranes. Converts UDP-glucose and sulfite to the sulfolipid head group precursor UDP-sulfoquinovose. In Arabidopsis thaliana (Mouse-ear cress), this protein is UDP-sulfoquinovose synthase, chloroplastic (SQD1).